The primary structure comprises 326 residues: Undecaprenyl-phosphate 4-deoxy-4-formamido-L-arabinose transferase (326 aa).

The Cytoplasmic portion of the chain corresponds to 1 to 235 (MFEIHPIKKV…TCLTTTPLRM (235 aa)). The helical transmembrane segment at 236-256 (LSLLGSIIATSGFSLAILLVV) threads the bilayer. Residues 257-269 (LRLAFGSQWSGEG) lie on the Periplasmic side of the membrane. A helical transmembrane segment spans residues 270 to 290 (VFMLFAVLFTFIGAQFIGMGL). Over 291-326 (LGEYIGRIYNDVRARPRYFVQKVIRPASSIDIEENH) the chain is Cytoplasmic.

This sequence belongs to the glycosyltransferase 2 family.

The protein localises to the cell inner membrane. It catalyses the reaction UDP-4-deoxy-4-formamido-beta-L-arabinose + di-trans,octa-cis-undecaprenyl phosphate = 4-deoxy-4-formamido-alpha-L-arabinopyranosyl di-trans,octa-cis-undecaprenyl phosphate + UDP. It functions in the pathway glycolipid biosynthesis; 4-amino-4-deoxy-alpha-L-arabinose undecaprenyl phosphate biosynthesis; 4-amino-4-deoxy-alpha-L-arabinose undecaprenyl phosphate from UDP-4-deoxy-4-formamido-beta-L-arabinose and undecaprenyl phosphate: step 1/2. It participates in bacterial outer membrane biogenesis; lipopolysaccharide biosynthesis. Catalyzes the transfer of 4-deoxy-4-formamido-L-arabinose from UDP to undecaprenyl phosphate. The modified arabinose is attached to lipid A and is required for resistance to polymyxin and cationic antimicrobial peptides. This Escherichia fergusonii (strain ATCC 35469 / DSM 13698 / CCUG 18766 / IAM 14443 / JCM 21226 / LMG 7866 / NBRC 102419 / NCTC 12128 / CDC 0568-73) protein is Undecaprenyl-phosphate 4-deoxy-4-formamido-L-arabinose transferase.